Here is a 117-residue protein sequence, read N- to C-terminus: Large ribosomal subunit protein bL20 (117 aa).

It belongs to the bacterial ribosomal protein bL20 family.

In terms of biological role, binds directly to 23S ribosomal RNA and is necessary for the in vitro assembly process of the 50S ribosomal subunit. It is not involved in the protein synthesizing functions of that subunit. In Vibrio atlanticus (strain LGP32) (Vibrio splendidus (strain Mel32)), this protein is Large ribosomal subunit protein bL20.